We begin with the raw amino-acid sequence, 625 residues long: Tyrosine-protein kinase ITK/TSK (625 aa).

Positions 4 to 117 (FILLEEQLIK…WVLTLKEETR (114 aa)) constitute a PH domain. Residues 119 to 155 (NNSLVSKYHPNFWMDGRWRCCSQLEKPAVGCAPYDPS) form a Btk-type zinc finger. Residues H127, C138, C139, and C149 each contribute to the Zn(2+) site. The segment at 153 to 174 (DPSKNASKKPLPPTPEDNRRSF) is disordered. The region spanning 177–237 (PEETLVIALY…PSSYLVEKSP (61 aa)) is the SH3 domain. A Phosphotyrosine; by autocatalysis modification is found at Y186. An SH2 domain is found at 245-343 (WYNKSISRDK…GLVTRLRYPV (99 aa)). Residues 368 to 620 (LTFVQEIGSG…SQLLSQLAEI (253 aa)) enclose the Protein kinase domain. ATP contacts are provided by residues 374–382 (IGSGQFGLV) and K396. The active-site Proton acceptor is the D487. A Phosphotyrosine; by LCK modification is found at Y517. Phosphoserine is present on S570.

It belongs to the protein kinase superfamily. Tyr protein kinase family. TEC subfamily. In terms of assembly, homooligomerizes; this association negatively regulates kinase activity. Interacts with PPIA/CYPA; this interaction regulates TCR signal strength via a proline-directed conformational switch in ITK. Interacts with THEMIS. Interacts with FASLG. Interacts with VAV1; this interaction is important for VAV1 localization and TCR-induced actin polarization. Interacts with TBX21. The cofactor is Zn(2+). In terms of processing, phosphorylated at Tyr-517 in the activation loop of the kinase domain by LCK. Subsequent autophosphorylation at Tyr-186 leads to the kinase activation. The autophosphorylated Tyr-186 lies within the substrate binding sequence of the SH3 domain. Post-translationally, ubiquitinated. As to expression, is detected in the thymus, lymph node and very faintly in the spleen, but is not detected in the liver, lung, kidney, heart, brain, intestine or testis. Expressed in T-lymphocytes and mast cells. It may also be expressed in natural killer cells.

It localises to the cytoplasm. The protein resides in the nucleus. It catalyses the reaction L-tyrosyl-[protein] + ATP = O-phospho-L-tyrosyl-[protein] + ADP + H(+). Its function is as follows. Tyrosine kinase that plays an essential role in regulation of the adaptive immune response. Regulates the development, function and differentiation of conventional T-cells and nonconventional NKT-cells. When antigen presenting cells (APC) activate T-cell receptor (TCR), a series of phosphorylation lead to the recruitment of ITK to the cell membrane, in the vicinity of the stimulated TCR receptor, where it is phosphorylated by LCK. Phosphorylation leads to ITK autophosphorylation and full activation. Once activated, phosphorylates PLCG1, leading to the activation of this lipase and subsequent cleavage of its substrates. In turn, the endoplasmic reticulum releases calcium in the cytoplasm and the nuclear activator of activated T-cells (NFAT) translocates into the nucleus to perform its transcriptional duty. Phosphorylates 2 essential adapter proteins: the linker for activation of T-cells/LAT protein and LCP2. Then, a large number of signaling molecules such as VAV1 are recruited and ultimately lead to lymphokine production, T-cell proliferation and differentiation. Required for TCR-mediated calcium response in gamma-delta T-cells, may also be involved in the modulation of the transcriptomic signature in the Vgamma2-positive subset of immature gamma-delta T-cells. Phosphorylates TBX21 at 'Tyr-525' and mediates its interaction with GATA3. The protein is Tyrosine-protein kinase ITK/TSK (Itk) of Mus musculus (Mouse).